We begin with the raw amino-acid sequence, 786 residues long: uncharacterized protein (786 aa).

361-362 (WD) contacts substrate. Glutamate 488 acts as the Proton donor in catalysis. 590–591 (KQ) is a substrate binding site. Residues 762-786 (TRKPLLPPPPQPPGREPVHRRALAR) form a disordered region. Over residues 766–776 (LLPPPPQPPGR) the composition is skewed to pro residues.

It belongs to the glycosyl hydrolase 65 family.

This is an uncharacterized protein from Mycobacterium tuberculosis (strain CDC 1551 / Oshkosh).